The sequence spans 342 residues: Anthranilate phosphoribosyltransferase (342 aa).

5-phospho-alpha-D-ribose 1-diphosphate is bound by residues Gly-90, 93–94 (GS), Thr-98, 100–103 (NIST), 118–126 (KHGNRRATS), and Ser-130. Residue Gly-90 participates in anthranilate binding. Ser-102 contacts Mg(2+). Asn-121 contacts anthranilate. Arg-176 provides a ligand contact to anthranilate. Residues Asp-235 and Glu-236 each contribute to the Mg(2+) site.

Belongs to the anthranilate phosphoribosyltransferase family. In terms of assembly, homodimer. The cofactor is Mg(2+).

The enzyme catalyses N-(5-phospho-beta-D-ribosyl)anthranilate + diphosphate = 5-phospho-alpha-D-ribose 1-diphosphate + anthranilate. Its pathway is amino-acid biosynthesis; L-tryptophan biosynthesis; L-tryptophan from chorismate: step 2/5. In terms of biological role, catalyzes the transfer of the phosphoribosyl group of 5-phosphorylribose-1-pyrophosphate (PRPP) to anthranilate to yield N-(5'-phosphoribosyl)-anthranilate (PRA). This Rhodopirellula baltica (strain DSM 10527 / NCIMB 13988 / SH1) protein is Anthranilate phosphoribosyltransferase.